The following is a 315-amino-acid chain: Putative quercetin 2,3-dioxygenase PA1205 (315 aa).

Positions 77, 79, 121, and 123 each coordinate a divalent metal cation.

This sequence belongs to the pirin family. The cofactor is a divalent metal cation.

It carries out the reaction quercetin + O2 = 2-(3,4-dihydroxybenzoyloxy)-4,6-dihydroxybenzoate + CO. The protein operates within flavonoid metabolism; quercetin degradation. Functionally, putative quercetin 2,3-dioxygenase. This chain is Putative quercetin 2,3-dioxygenase PA1205, found in Pseudomonas aeruginosa (strain ATCC 15692 / DSM 22644 / CIP 104116 / JCM 14847 / LMG 12228 / 1C / PRS 101 / PAO1).